Consider the following 214-residue polypeptide: Octanoyltransferase (214 aa).

A BPL/LPL catalytic domain is found at Ser-29–Ser-214. Substrate-binding positions include Arg-69–His-76, Ala-146–Gly-148, and Gly-159–Ala-161. The active-site Acyl-thioester intermediate is Cys-177.

The protein belongs to the LipB family.

The protein localises to the cytoplasm. The enzyme catalyses octanoyl-[ACP] + L-lysyl-[protein] = N(6)-octanoyl-L-lysyl-[protein] + holo-[ACP] + H(+). It participates in protein modification; protein lipoylation via endogenous pathway; protein N(6)-(lipoyl)lysine from octanoyl-[acyl-carrier-protein]: step 1/2. Catalyzes the transfer of endogenously produced octanoic acid from octanoyl-acyl-carrier-protein onto the lipoyl domains of lipoate-dependent enzymes. Lipoyl-ACP can also act as a substrate although octanoyl-ACP is likely to be the physiological substrate. The protein is Octanoyltransferase of Polynucleobacter necessarius subsp. necessarius (strain STIR1).